The sequence spans 418 residues: Pyruvate kinase isozyme G, chloroplastic (418 aa).

2 residues coordinate K(+): Asp14 and Thr15. Arg21 contributes to the ATP binding site. Glu165 contacts Mg(2+). Substrate is bound by residues Gly188, Asp189, and Thr221. Asp189 contacts Mg(2+).

This sequence belongs to the pyruvate kinase family. It depends on Mg(2+) as a cofactor. Requires K(+) as cofactor. In terms of tissue distribution, expressed in developing and germinating endosperm and in roots.

It localises to the plastid. Its subcellular location is the chloroplast. The enzyme catalyses pyruvate + ATP = phosphoenolpyruvate + ADP + H(+). It participates in carbohydrate degradation; glycolysis; pyruvate from D-glyceraldehyde 3-phosphate: step 5/5. In Ricinus communis (Castor bean), this protein is Pyruvate kinase isozyme G, chloroplastic.